The sequence spans 244 residues: Protein crossbronx (244 aa).

In terms of domain architecture, UBC core spans 20-176 (QQEYKILAEY…VQENIKESKE (157 aa)). Residues 209–244 (AGRSKQTEPSAQQGNGGHATGLSWVKEGEFKPLSIE) form a disordered region.

The protein belongs to the ubiquitin-conjugating enzyme family. FTS subfamily.

The polypeptide is Protein crossbronx (cbx) (Drosophila simulans (Fruit fly)).